Here is a 441-residue protein sequence, read N- to C-terminus: Ribulose bisphosphate carboxylase large chain (441 aa).

Lysine 5 carries the post-translational modification N6,N6,N6-trimethyllysine. Substrate is bound by residues asparagine 114 and threonine 164. Catalysis depends on lysine 166, which acts as the Proton acceptor. Lysine 168 lines the substrate pocket. Mg(2+) is bound by residues lysine 192, aspartate 194, and glutamate 195. At lysine 192 the chain carries N6-carboxylysine. Histidine 285 acts as the Proton acceptor in catalysis. Residues arginine 286, histidine 318, and serine 370 each coordinate substrate.

This sequence belongs to the RuBisCO large chain family. Type I subfamily. Heterohexadecamer of 8 large chains and 8 small chains; disulfide-linked. The disulfide link is formed within the large subunit homodimers. Mg(2+) is required as a cofactor. In terms of processing, the disulfide bond which can form in the large chain dimeric partners within the hexadecamer appears to be associated with oxidative stress and protein turnover.

Its subcellular location is the plastid. It localises to the chloroplast. The catalysed reaction is 2 (2R)-3-phosphoglycerate + 2 H(+) = D-ribulose 1,5-bisphosphate + CO2 + H2O. It catalyses the reaction D-ribulose 1,5-bisphosphate + O2 = 2-phosphoglycolate + (2R)-3-phosphoglycerate + 2 H(+). RuBisCO catalyzes two reactions: the carboxylation of D-ribulose 1,5-bisphosphate, the primary event in carbon dioxide fixation, as well as the oxidative fragmentation of the pentose substrate in the photorespiration process. Both reactions occur simultaneously and in competition at the same active site. This Glycyrrhiza echinata (Licorice) protein is Ribulose bisphosphate carboxylase large chain.